Here is a 488-residue protein sequence, read N- to C-terminus: 7,8-epoxymelianol synthase CYP88A51 (488 aa).

A helical transmembrane segment spans residues Asn4 to Leu24. Position 436 (Cys436) interacts with heme.

It belongs to the cytochrome P450 family. Heme serves as cofactor. In terms of tissue distribution, accumulates in mature fruits and in juice vesicles.

Its subcellular location is the membrane. The enzyme catalyses melianol + reduced [NADPH--hemoprotein reductase] + O2 = 7,8-epoxymelianol + oxidized [NADPH--hemoprotein reductase] + H2O + H(+). It participates in secondary metabolite biosynthesis; terpenoid biosynthesis. Functionally, monooxygenase involved in the biosynthesis of limonoids triterpene natural products such as limonin, a compound with insecticidal activity responsible for the bitter taste in citrus. Catalyzes the epoxidation of melianol to produce 7,8-epoxymelianol. The chain is 7,8-epoxymelianol synthase CYP88A51 from Citrus sinensis (Sweet orange).